A 741-amino-acid chain; its full sequence is Mitofusin-1 (741 aa).

Residues 1 to 584 (MAEPVSPLKH…ASQEELMITL (584 aa)) lie on the Cytoplasmic side of the membrane. Residues 9 to 73 (KHFVLAKKAI…LSIIGEVLSR (65 aa)) are part of a helix bundle domain, formed by helices from N-terminal and C-terminal regions. A Dynamin-type G domain is found at 72 to 321 (SRRHMKVAFF…ARLQEFQNFE (250 aa)). The tract at residues 82–89 (GRTSSGKS) is G1 motif. Residue 85 to 90 (SSGKSS) participates in GTP binding. The interval 108 to 109 (IT) is G2 motif. Residues 178-181 (DSPG) are G3 motif. Residue 237-240 (NRWD) coordinates GTP. The interval 237–240 (NRWD) is G4 motif. Position 266 (Glu266) is a region of interest, G5 motif. 2 residues coordinate GTP: Ser284 and Lys286. The tract at residues 338–364 (EQHTIRAKQILATVKNIMDSVNLAAED) is part of a helix bundle domain, formed by helices from N-terminal and C-terminal regions. A coiled-coil region spans residues 371 to 408 (EEREDQIDRLDFIRNQMNLLTLDVKKKIKEVTEEVANK). The helical transmembrane segment at 585–605 (VTGLASVTSRTSMGIIIVGGV) threads the bilayer. The Mitochondrial intermembrane segment spans residues 606–608 (IWK). A helical membrane pass occupies residues 609 to 629 (TIGWKLLSVSLTMYGALYLYE). The Cytoplasmic portion of the chain corresponds to 630 to 741 (RLSWTTHAKE…QFLPSSNEES (112 aa)). Residues 679 to 734 (RLCQQVDITQKQLEEEIARLPKEIDQLEKIQNNSKLLRNKAVQLENELENFTKQFL) are a coiled coil. Positions 703 to 734 (DQLEKIQNNSKLLRNKAVQLENELENFTKQFL) are part of a helix bundle domain, formed by helices from N-terminal and C-terminal regions.

This sequence belongs to the TRAFAC class dynamin-like GTPase superfamily. Dynamin/Fzo/YdjA family. Mitofusin subfamily. In terms of assembly, homodimer, also in the absence of bound GTP. Forms higher oligomers in the presence of a transition state GTP analog. Forms homomultimers and heteromultimers with MFN2. Oligomerization is essential for mitochondrion fusion. Component of a high molecular weight multiprotein complex. Interacts with VAT1. Interacts with THG1L; THG1L probably functions as a guanyl-nucleotide exchange factor/GEF, activating MFN1. Ubiquitinated by non-degradative ubiquitin by PRKN. Deubiquitination by USP30 inhibits mitochondrial fusion. Ubiquitinated by MARCHF5. When mitochondria are depolarized and dysfunctional, it is ubiquitinated by a SCF (SKP1-CUL1-F-box protein) E3 ubiquitin-protein ligase complex that contains FBXO7 and PRKN. In terms of tissue distribution, detected in kidney and heart (at protein level). Ubiquitous. Expressed at slightly higher level in kidney and heart. Isoform 2 may be overexpressed in some tumors, such as lung cancers.

The protein localises to the mitochondrion outer membrane. Its subcellular location is the cytoplasm. The catalysed reaction is GTP + H2O = GDP + phosphate + H(+). Mitochondrial outer membrane GTPase that mediates mitochondrial clustering and fusion. Membrane clustering requires GTPase activity. It may involve a major rearrangement of the coiled coil domains. Mitochondria are highly dynamic organelles, and their morphology is determined by the equilibrium between mitochondrial fusion and fission events. Overexpression induces the formation of mitochondrial networks (in vitro). Has low GTPase activity. In Homo sapiens (Human), this protein is Mitofusin-1 (MFN1).